The chain runs to 98 residues: MTLTYMNIMLAFAISLLGMLTYRSHLVASLLCLEGMMMSLFIMATLIASNTHFPLINIMPIILLVFAACETAVGLALLISISNTYGLDYVHNLNLLQC.

3 consecutive transmembrane segments (helical) span residues 1-21 (MTLT…GMLT), 27-47 (VASL…ATLI), and 61-81 (IILL…LISI).

Belongs to the complex I subunit 4L family. As to quaternary structure, core subunit of respiratory chain NADH dehydrogenase (Complex I) which is composed of 45 different subunits.

It localises to the mitochondrion inner membrane. The catalysed reaction is a ubiquinone + NADH + 5 H(+)(in) = a ubiquinol + NAD(+) + 4 H(+)(out). In terms of biological role, core subunit of the mitochondrial membrane respiratory chain NADH dehydrogenase (Complex I) which catalyzes electron transfer from NADH through the respiratory chain, using ubiquinone as an electron acceptor. Part of the enzyme membrane arm which is embedded in the lipid bilayer and involved in proton translocation. This is NADH-ubiquinone oxidoreductase chain 4L (MT-ND4L) from Macaca mulatta (Rhesus macaque).